Here is a 681-residue protein sequence, read N- to C-terminus: Potassium-transporting ATPase ATP-binding subunit (681 aa).

4 helical membrane passes run Leu30–Ile50, Leu59–Ala79, Ile216–Thr236, and Ile255–Ile275. Asp306 serves as the catalytic 4-aspartylphosphate intermediate. Residues Asp343, Glu347, Phe376–Ser383, and Lys394 each bind ATP. 2 residues coordinate Mg(2+): Asp517 and Asp521. The next 3 helical transmembrane spans lie at Phe587–Met607, Ala615–Leu635, and Leu661–Val681.

The protein belongs to the cation transport ATPase (P-type) (TC 3.A.3) family. Type IA subfamily. The system is composed of three essential subunits: KdpA, KdpB and KdpC.

Its subcellular location is the cell membrane. The catalysed reaction is K(+)(out) + ATP + H2O = K(+)(in) + ADP + phosphate + H(+). Part of the high-affinity ATP-driven potassium transport (or Kdp) system, which catalyzes the hydrolysis of ATP coupled with the electrogenic transport of potassium into the cytoplasm. This subunit is responsible for energy coupling to the transport system and for the release of the potassium ions to the cytoplasm. This is Potassium-transporting ATPase ATP-binding subunit from Listeria monocytogenes serotype 4b (strain CLIP80459).